The following is a 318-amino-acid chain: MKEYKTIDLFAGIGGIRLGFEAFGCKNVFSSEWDKYAQSMYEVNFGEKPFGDINDISPSDIPDHDILLAGFPCQPFSIAGKGLGFADTRGTLFFNIEAILKAKKPKAFLLENVKRLTTHDNGNTFKVINDKLNKLGYTVYHKVLNTLDFGLPQKRERIYIVGFLDKLHFEFPKPIGKYEELSNILESDDVVPNNYFLSDELKRKRLSSITKDVPYPSIWHENISGNVSALPYSCALSVGGSYNYLVVNGVRRLTGPEMLRLQGFPDTFEINIPYSQVRKVAGNSVSVPVIRAIAGSMINSLNMATRKIYQAIQLSLLD.

The region spanning 4–304 (YKTIDLFAGI…GSMINSLNMA (301 aa)) is the SAM-dependent MTase C5-type domain. Residue cysteine 73 is part of the active site.

This sequence belongs to the class I-like SAM-binding methyltransferase superfamily. C5-methyltransferase family.

It carries out the reaction a 2'-deoxycytidine in DNA + S-adenosyl-L-methionine = a 5-methyl-2'-deoxycytidine in DNA + S-adenosyl-L-homocysteine + H(+). A methylase, recognizes the double-stranded sequence 5'-RGCGCY-3', methylates C-? on both strands, and protects the DNA from cleavage by the HaeII endonuclease. This is Type II methyltransferase M.HaeII (haeIIM) from Haemophilus aegyptius.